The sequence spans 533 residues: Flavin-dependent halogenase armH4 (533 aa).

G16, A19, and E49 together coordinate FAD. S337 and G338 together coordinate chloride. V339 is an FAD binding site.

This sequence belongs to the flavin-dependent halogenase family.

The enzyme catalyses melleolide F + FADH2 + chloride + O2 = 6'-chloromelleolide F + FAD + 2 H2O + H(+). It carries out the reaction melleolide F + bromide + FADH2 + O2 = 6'-bromomelleolide F + FAD + 2 H2O. Functionally, flavin-dependent halogenase involved in the biosynthesis of melleolides, a range of antifungal and phytotoxic polyketide derivatives composed of an orsellinic acid (OA) moiety esterified to various sesquiterpene alcohols. The halogenase catalyzes the transfer of a single chlorine atom to the melleolide backbone, resulting in a 6'-chloromelleolide product. The enzyme acts on free substrate and does not depend on carrier-protein-dependent acceptor molecules. Can also catalyze the transfer of a single bromine atom to the melleolide backbone in vitro. The polypeptide is Flavin-dependent halogenase armH4 (Armillaria mellea (Honey mushroom)).